The chain runs to 580 residues: Multidrug resistance-like ATP-binding protein MdlB (580 aa).

An ABC transmembrane type-1 domain is found at 25–310 (IILAFFLLLS…ITIQQSILQQ (286 aa)). The next 5 membrane-spanning stretches (helical) occupy residues 26-46 (ILAF…PILI), 61-81 (FQLI…AVFF), 142-162 (VGPT…AMFT), 165-185 (WHMA…MSIY), and 258-278 (LLSA…SIGV). Residues 341–575 (INIKNLSFKY…KGFYWKMYNF (235 aa)) enclose the ABC transporter domain. 375–382 (GQTGSGKS) is a binding site for ATP.

It belongs to the ABC transporter superfamily. Drug exporter-2 (TC 3.A.1.117) family.

It is found in the cell membrane. It catalyses the reaction ATP + H2O + xenobioticSide 1 = ADP + phosphate + xenobioticSide 2.. The protein is Multidrug resistance-like ATP-binding protein MdlB (mdlB) of Buchnera aphidicola subsp. Schizaphis graminum (strain Sg).